The primary structure comprises 670 residues: Acetyl-coenzyme A synthetase (670 aa).

Residues 205-208 (RRGK) and Thr-326 each bind CoA. Residues 402–404 (GEP), 426–431 (STWWMT), Asp-517, Arg-532, and Arg-543 contribute to the ATP site. Mg(2+)-binding residues include Val-554, His-556, and Val-559. Arg-601 is a CoA binding site. Lys-626 is modified (N6-acetyllysine).

The protein belongs to the ATP-dependent AMP-binding enzyme family. Mg(2+) serves as cofactor. In terms of processing, acetylated. Deacetylation by the SIR2-homolog deacetylase activates the enzyme.

It carries out the reaction acetate + ATP + CoA = acetyl-CoA + AMP + diphosphate. Its function is as follows. Catalyzes the conversion of acetate into acetyl-CoA (AcCoA), an essential intermediate at the junction of anabolic and catabolic pathways. AcsA undergoes a two-step reaction. In the first half reaction, AcsA combines acetate with ATP to form acetyl-adenylate (AcAMP) intermediate. In the second half reaction, it can then transfer the acetyl group from AcAMP to the sulfhydryl group of CoA, forming the product AcCoA. The protein is Acetyl-coenzyme A synthetase of Pyrobaculum arsenaticum (strain DSM 13514 / JCM 11321 / PZ6).